A 567-amino-acid chain; its full sequence is Urease subunit alpha (567 aa).

The Urease domain occupies 129 to 567 (GGVDSHIHFI…LPLAQRYFLF (439 aa)). Positions 134, 136, and 217 each coordinate Ni(2+). Lys217 is modified (N6-carboxylysine). His219 serves as a coordination point for substrate. Residues His246 and His272 each coordinate Ni(2+). The Proton donor role is filled by His320. Asp360 contacts Ni(2+).

It belongs to the metallo-dependent hydrolases superfamily. Urease alpha subunit family. As to quaternary structure, heterotrimer of UreA (gamma), UreB (beta) and UreC (alpha) subunits. Three heterotrimers associate to form the active enzyme. Requires Ni cation as cofactor. Carboxylation allows a single lysine to coordinate two nickel ions.

It is found in the cytoplasm. The enzyme catalyses urea + 2 H2O + H(+) = hydrogencarbonate + 2 NH4(+). Its pathway is nitrogen metabolism; urea degradation; CO(2) and NH(3) from urea (urease route): step 1/1. The sequence is that of Urease subunit alpha from Pseudomonas putida (strain ATCC 47054 / DSM 6125 / CFBP 8728 / NCIMB 11950 / KT2440).